Consider the following 95-residue polypeptide: UPF0381 protein HI_0400 (95 aa).

Belongs to the UPF0381 family.

This chain is UPF0381 protein HI_0400, found in Haemophilus influenzae (strain ATCC 51907 / DSM 11121 / KW20 / Rd).